The chain runs to 90 residues: Small ribosomal subunit protein uS15 (90 aa).

The protein belongs to the universal ribosomal protein uS15 family. As to quaternary structure, part of the 30S ribosomal subunit. Forms a bridge to the 50S subunit in the 70S ribosome, contacting the 23S rRNA.

In terms of biological role, one of the primary rRNA binding proteins, it binds directly to 16S rRNA where it helps nucleate assembly of the platform of the 30S subunit by binding and bridging several RNA helices of the 16S rRNA. Its function is as follows. Forms an intersubunit bridge (bridge B4) with the 23S rRNA of the 50S subunit in the ribosome. The sequence is that of Small ribosomal subunit protein uS15 from Campylobacter jejuni subsp. doylei (strain ATCC BAA-1458 / RM4099 / 269.97).